We begin with the raw amino-acid sequence, 444 residues long: Na(+)-translocating NADH-quinone reductase subunit A (444 aa).

The protein belongs to the NqrA family. In terms of assembly, composed of six subunits; NqrA, NqrB, NqrC, NqrD, NqrE and NqrF.

It carries out the reaction a ubiquinone + n Na(+)(in) + NADH + H(+) = a ubiquinol + n Na(+)(out) + NAD(+). Its function is as follows. NQR complex catalyzes the reduction of ubiquinone-1 to ubiquinol by two successive reactions, coupled with the transport of Na(+) ions from the cytoplasm to the periplasm. NqrA to NqrE are probably involved in the second step, the conversion of ubisemiquinone to ubiquinol. This Shewanella frigidimarina (strain NCIMB 400) protein is Na(+)-translocating NADH-quinone reductase subunit A.